Consider the following 974-residue polypeptide: Villin-4 (974 aa).

6 Gelsolin-like repeats span residues 29–79 (FIPT…DEAG), 150–190 (VHVK…QERA), 262–305 (GQAN…DDRK), 394–451 (LQVW…EERG), 532–572 (MQAI…TDQE), and 634–675 (LKVT…KNKL). A disordered region spans residues 738 to 783 (VKNGGTPVADKPKRRTPASYGGRASVPDKSQQRSRSMSFSPDRVRV). Residues Ser777 and Ser787 each carry the phosphoserine modification. Disordered regions lie at residues 801–833 (NARN…APKS) and 845–930 (KIPP…PVSD). Low complexity predominate over residues 824–833 (SSKFAPAPKS). A compositionally biased stretch (basic and acidic residues) spans 872–887 (NSKEQEEKKENDKEEG). The segment covering 888-898 (SMSSRIESLTI) has biased composition (polar residues). Ser890 is subject to Phosphoserine. One can recognise an HP domain in the interval 909 to 974 (EEDLPAHPYD…NKFKMAVQLF (66 aa)). Positions 912-921 (LPAHPYDRLK) are enriched in basic and acidic residues.

Belongs to the villin/gelsolin family. In terms of tissue distribution, preferentially expressed in vegetative tissues. Detected in the whole seedling, hypocotyl, cotyledon, primary root, roots hair cells and trichomes. Expressed in flowers but not in the silique.

It localises to the cytoplasm. It is found in the cytoskeleton. Binds actin and actin filament bundles in a Ca(2+)-insensitive manner, but caps the barbed end of actin filaments and is able to sever them in a calcium-dependent manner. Involved in root hair growth through regulating actin organization in a Ca(2+)-dependent manner. This Arabidopsis thaliana (Mouse-ear cress) protein is Villin-4.